The sequence spans 469 residues: MNPNQKIITIGSVSLTIATICFLMQIAIQVTTVTLHFKQYECDSPANNQVMPCEPIIIERNITEIVYLTNTTIEKEICPKLVEYRNWSKPQCKITGFAPFSKDNSIRLSAGGDIWVTREPYVSCDPGKCYQFALGQGTTLDNKHSNDTIHDRTPHRTLLMNELGVPFHLGTRQVCIGWSSSSCHDGKAWLHVCVTGYDKNATASFIYDGRLVDSIGSWSQNILRTQESECVCINGTCTVVMTDGSASGRADTKILFIEEGKIVHISPLSGSAQHVEECSCYPRYPGVRCICRDNWKGSNRPVVDINVKDYSIDSSYVCSGLVGDTPRNNDRSSNSYCRNPNNEKGNHGVKGWAFDDGNDVWMGRTISEDSRSGYETFKVIGGWSTPNSKLQINRQVIVDSDNRSGYSGIFSVEGKSCINRCFYVELIRGREQETRVWWTSNSIVVFCGTSGTYGTGSWPDGADINLMPI.

The Intravirion segment spans residues 1-6 (MNPNQK). A helical transmembrane segment spans residues 7-29 (IITIGSVSLTIATICFLMQIAIQ). The involved in apical transport and lipid raft association stretch occupies residues 11–33 (GSVSLTIATICFLMQIAIQVTTV). The Virion surface portion of the chain corresponds to 30–469 (VTTVTLHFKQ…DGADINLMPI (440 aa)). The hypervariable stalk region stretch occupies residues 36–88 (HFKQYECDSPANNQVMPCEPIIIERNITEIVYLTNTTIEKEICPKLVEYRNWS). N-linked (GlcNAc...) asparagine; by host glycosylation is found at asparagine 61, asparagine 70, and asparagine 86. A head of neuraminidase region spans residues 91 to 469 (QCKITGFAPF…DGADINLMPI (379 aa)). 8 disulfides stabilise this stretch: cysteine 92–cysteine 417, cysteine 124–cysteine 129, cysteine 183–cysteine 230, cysteine 232–cysteine 237, cysteine 278–cysteine 291, cysteine 280–cysteine 289, cysteine 318–cysteine 337, and cysteine 421–cysteine 447. Arginine 118 serves as a coordination point for substrate. The N-linked (GlcNAc...) asparagine; by host glycan is linked to asparagine 146. Catalysis depends on aspartate 151, which acts as the Proton donor/acceptor. Arginine 152 is a binding site for substrate. 2 N-linked (GlcNAc...) asparagine; by host glycosylation sites follow: asparagine 200 and asparagine 234. Residue 276–277 (EE) coordinates substrate. Substrate is bound at residue arginine 292. The Ca(2+) site is built by aspartate 293, glycine 297, and aspartate 324. Arginine 371 contributes to the substrate binding site. Asparagine 402 carries N-linked (GlcNAc...) asparagine; by host glycosylation. Tyrosine 406 serves as the catalytic Nucleophile.

Belongs to the glycosyl hydrolase 34 family. Homotetramer. It depends on Ca(2+) as a cofactor. Post-translationally, N-glycosylated.

It localises to the virion membrane. Its subcellular location is the host apical cell membrane. The enzyme catalyses Hydrolysis of alpha-(2-&gt;3)-, alpha-(2-&gt;6)-, alpha-(2-&gt;8)- glycosidic linkages of terminal sialic acid residues in oligosaccharides, glycoproteins, glycolipids, colominic acid and synthetic substrates.. Its activity is regulated as follows. Inhibited by the neuraminidase inhibitors zanamivir (Relenza) and oseltamivir (Tamiflu). These drugs interfere with the release of progeny virus from infected cells and are effective against all influenza strains. Resistance to neuraminidase inhibitors is quite rare. Functionally, catalyzes the removal of terminal sialic acid residues from viral and cellular glycoconjugates. Cleaves off the terminal sialic acids on the glycosylated HA during virus budding to facilitate virus release. Additionally helps virus spread through the circulation by further removing sialic acids from the cell surface. These cleavages prevent self-aggregation and ensure the efficient spread of the progeny virus from cell to cell. Otherwise, infection would be limited to one round of replication. Described as a receptor-destroying enzyme because it cleaves a terminal sialic acid from the cellular receptors. May facilitate viral invasion of the upper airways by cleaving the sialic acid moieties on the mucin of the airway epithelial cells. Likely to plays a role in the budding process through its association with lipid rafts during intracellular transport. May additionally display a raft-association independent effect on budding. Plays a role in the determination of host range restriction on replication and virulence. Sialidase activity in late endosome/lysosome traffic seems to enhance virus replication. The polypeptide is Neuraminidase (Aves (whales)).